The following is a 289-amino-acid chain: Probable porphobilinogen deaminase (289 aa).

S-(dipyrrolylmethanemethyl)cysteine is present on C234.

This sequence belongs to the HMBS family. Dipyrromethane serves as cofactor.

It catalyses the reaction 4 porphobilinogen + H2O = hydroxymethylbilane + 4 NH4(+). It functions in the pathway porphyrin-containing compound metabolism; protoporphyrin-IX biosynthesis; coproporphyrinogen-III from 5-aminolevulinate: step 2/4. In terms of biological role, tetrapolymerization of the monopyrrole PBG into the hydroxymethylbilane pre-uroporphyrinogen in several discrete steps. This Archaeoglobus fulgidus (strain ATCC 49558 / DSM 4304 / JCM 9628 / NBRC 100126 / VC-16) protein is Probable porphobilinogen deaminase (hemC).